We begin with the raw amino-acid sequence, 388 residues long: Adenosine deaminase-like protein (388 aa).

Positions 1-13 are enriched in basic residues; sequence MPNNSKHKKKQQR. A disordered region spans residues 1 to 34; the sequence is MPNNSKHKKKQQRRQQEAQKKSRAKQIETDKKND. The span at 14 to 34 shows a compositional bias: basic and acidic residues; that stretch reads RQQEAQKKSRAKQIETDKKND. The Zn(2+) site is built by histidine 65 and histidine 67. N(6)-methyl-AMP contacts are provided by residues histidine 67, histidine 114, 146 to 149, aspartate 186, and glycine 218; that span reads TSPK. Residue histidine 245 participates in Zn(2+) binding. Positions 248, 326, and 327 each coordinate N(6)-methyl-AMP. The active-site Proton donor is glutamate 248. Position 326 (aspartate 326) interacts with Zn(2+).

It belongs to the metallo-dependent hydrolases superfamily. Adenosine and AMP deaminases family. In terms of assembly, monomer. The cofactor is Zn(2+).

The enzyme catalyses N(6)-methyl-AMP + H2O + H(+) = IMP + methylamine. In terms of biological role, catalyzes the hydrolysis of the free cytosolic methylated adenosine nucleotide N(6)-methyl-AMP (N6-mAMP) to produce inositol monophosphate (IMP) and methylamine. Is required for the catabolism of cytosolic N6-mAMP, which is derived from the degradation of mRNA containing N6-methylated adenine (m6A). This is Adenosine deaminase-like protein from Caenorhabditis elegans.